We begin with the raw amino-acid sequence, 393 residues long: Protein TsgA (393 aa).

A run of 12 helical transmembrane segments spans residues 11–31, 51–71, 78–98, 101–121, 134–154, 162–182, 206–226, 245–265, 273–293, 297–317, 332–352, and 361–381; these read WISF…GMVM, FLNA…EIVP, FGFL…SLAL, AAMF…TFLI, LLFT…IAAF, WYWV…LTFG, IGVL…LGFI, TLVS…SFIL, ILTV…TGTP, AWSI…IITL, FVLT…GPIV, and LLTA…LGFV.

The protein belongs to the major facilitator superfamily. TsgA family.

The protein localises to the cell inner membrane. This is Protein TsgA from Shigella dysenteriae serotype 1 (strain Sd197).